We begin with the raw amino-acid sequence, 248 residues long: 1,2-phenylacetyl-CoA epoxidase, subunit C (248 aa).

Residues Q76–N79 and I177–L179 contribute to the substrate site.

As to quaternary structure, forms a stable heterotetramer (dimer of heterodimers) with PaaA and a stable heterodimer with PaaB.

The protein operates within aromatic compound metabolism; phenylacetate degradation. In terms of biological role, component of 1,2-phenylacetyl-CoA epoxidase multicomponent enzyme system which catalyzes the reduction of phenylacetyl-CoA (PA-CoA) to form 1,2-epoxyphenylacetyl-CoA. The subunit C may be essential for structural integrity of the alpha subunit. The protein is 1,2-phenylacetyl-CoA epoxidase, subunit C (paaC) of Escherichia coli (strain K12).